A 63-amino-acid chain; its full sequence is 2-hydroxymuconate tautomerase (63 aa).

The active-site Proton acceptor; via imino nitrogen is proline 2.

It belongs to the 4-oxalocrotonate tautomerase family. Homohexamer.

The enzyme catalyses (2Z,4E)-2-hydroxyhexa-2,4-dienedioate = (3E)-2-oxohex-3-enedioate. It functions in the pathway aromatic compound metabolism; salicylate degradation. In terms of biological role, catalyzes the ketonization of 2-hydroxymuconate stereoselectively to yield 2-oxo-3-hexenedioate. The sequence is that of 2-hydroxymuconate tautomerase (tdnL) from Pseudomonas putida (Arthrobacter siderocapsulatus).